The primary structure comprises 231 residues: Large ribosomal subunit protein uL1 (231 aa).

The protein belongs to the universal ribosomal protein uL1 family. In terms of assembly, part of the 50S ribosomal subunit.

Binds directly to 23S rRNA. The L1 stalk is quite mobile in the ribosome, and is involved in E site tRNA release. In terms of biological role, protein L1 is also a translational repressor protein, it controls the translation of the L11 operon by binding to its mRNA. In Acinetobacter baumannii (strain AB0057), this protein is Large ribosomal subunit protein uL1.